Here is a 1058-residue protein sequence, read N- to C-terminus: Isoleucine--tRNA ligase (1058 aa).

Positions 48-58 (PYTTGHIHLGT) match the 'HIGH' region motif. Positions 596–600 (KMSKS) match the 'KMSKS' region motif. Lys-599 is a binding site for ATP.

This sequence belongs to the class-I aminoacyl-tRNA synthetase family. IleS type 2 subfamily. Monomer. Zn(2+) is required as a cofactor.

The protein resides in the cytoplasm. It carries out the reaction tRNA(Ile) + L-isoleucine + ATP = L-isoleucyl-tRNA(Ile) + AMP + diphosphate. In terms of biological role, catalyzes the attachment of isoleucine to tRNA(Ile). As IleRS can inadvertently accommodate and process structurally similar amino acids such as valine, to avoid such errors it has two additional distinct tRNA(Ile)-dependent editing activities. One activity is designated as 'pretransfer' editing and involves the hydrolysis of activated Val-AMP. The other activity is designated 'posttransfer' editing and involves deacylation of mischarged Val-tRNA(Ile). The chain is Isoleucine--tRNA ligase from Methanosarcina acetivorans (strain ATCC 35395 / DSM 2834 / JCM 12185 / C2A).